Reading from the N-terminus, the 230-residue chain is tRNA (guanine-N(7)-)-methyltransferase (230 aa).

Positions 61, 86, 113, and 136 each coordinate S-adenosyl-L-methionine. The active site involves aspartate 136. Residues lysine 140, aspartate 172, and threonine 208–glutamate 211 each bind substrate.

It belongs to the class I-like SAM-binding methyltransferase superfamily. TrmB family.

The enzyme catalyses guanosine(46) in tRNA + S-adenosyl-L-methionine = N(7)-methylguanosine(46) in tRNA + S-adenosyl-L-homocysteine. Its pathway is tRNA modification; N(7)-methylguanine-tRNA biosynthesis. Its function is as follows. Catalyzes the formation of N(7)-methylguanine at position 46 (m7G46) in tRNA. The chain is tRNA (guanine-N(7)-)-methyltransferase from Mycobacterium leprae (strain Br4923).